We begin with the raw amino-acid sequence, 425 residues long: Ribulose bisphosphate carboxylase/oxygenase activase B, chloroplastic (425 aa).

The transit peptide at 1–43 (MASAFSSTVGAPASTPTIFLGKKVKNYYHGGNKMKSRVVRVMA) directs the protein to the chloroplast. Position 153 to 160 (153 to 160 (GGKGQGKS)) interacts with ATP.

It belongs to the RuBisCO activase family.

The protein localises to the plastid. It localises to the chloroplast stroma. Functionally, activation of RuBisCO (ribulose-1,5-bisphosphate carboxylase/oxygenase; EC 4.1.1.39) involves the ATP-dependent carboxylation of the epsilon-amino group of lysine leading to a carbamate structure. This Hordeum vulgare (Barley) protein is Ribulose bisphosphate carboxylase/oxygenase activase B, chloroplastic (RCAB).